We begin with the raw amino-acid sequence, 741 residues long: uncharacterized protein (741 aa).

Residues 64–103 (VETLLCMLEQLTIRIEFLTKEIAQQEAAYKDIQNTQKSLV) adopt a coiled-coil conformation. The segment covering 137–155 (FERQNRTAPLQSKVTTASL) has biased composition (polar residues). 3 disordered regions span residues 137–214 (FERQ…TGLP), 280–318 (RTYSSISSSSSPFKKKTQSHLPNRTTEVPSISKQLSKSS), and 330–364 (SVSSVTKSPSPTPQSAPRAQSASTETAQDLDFLTP). Low complexity-rich tracts occupy residues 161-173 (RTSMSSSPTASRT) and 197-209 (KSKSVLPPSKSLA). The span at 298 to 308 (SHLPNRTTEVP) shows a compositional bias: polar residues. Low complexity-rich tracts occupy residues 309 to 318 (SISKQLSKSS) and 330 to 344 (SVSSVTKSPSPTPQS). Over residues 346 to 356 (PRAQSASTETA) the composition is skewed to polar residues. 499 to 506 (GPPGTGKT) contributes to the ATP binding site.

This sequence belongs to the AAA ATPase family.

It localises to the cytoplasm. The protein resides in the nucleus. This is an uncharacterized protein from Schizosaccharomyces pombe (strain 972 / ATCC 24843) (Fission yeast).